Consider the following 156-residue polypeptide: Arginine repressor (156 aa).

This sequence belongs to the ArgR family.

Its subcellular location is the cytoplasm. Its pathway is amino-acid biosynthesis; L-arginine biosynthesis [regulation]. In terms of biological role, regulates arginine biosynthesis genes. This Shewanella putrefaciens (strain CN-32 / ATCC BAA-453) protein is Arginine repressor.